We begin with the raw amino-acid sequence, 98 residues long: Small ribosomal subunit protein uS19 (98 aa).

The tract at residues 77-98 is disordered; that stretch reads TRTFRGHAGGKAEKGGSAPRKK.

This sequence belongs to the universal ribosomal protein uS19 family.

In terms of biological role, protein S19 forms a complex with S13 that binds strongly to the 16S ribosomal RNA. The polypeptide is Small ribosomal subunit protein uS19 (Chlorobium limicola (strain DSM 245 / NBRC 103803 / 6330)).